The sequence spans 635 residues: Threonine--tRNA ligase (635 aa).

Residues 1-61 (MINISFPDGS…DNDCKLRILT (61 aa)) enclose the TGS domain. A catalytic region spans residues 242–533 (DHRKLGRELD…LIEEYAGRFP (292 aa)). Zn(2+) contacts are provided by Cys-333, His-384, and His-510.

The protein belongs to the class-II aminoacyl-tRNA synthetase family. In terms of assembly, homodimer. It depends on Zn(2+) as a cofactor.

It localises to the cytoplasm. It carries out the reaction tRNA(Thr) + L-threonine + ATP = L-threonyl-tRNA(Thr) + AMP + diphosphate + H(+). Its function is as follows. Catalyzes the attachment of threonine to tRNA(Thr) in a two-step reaction: L-threonine is first activated by ATP to form Thr-AMP and then transferred to the acceptor end of tRNA(Thr). Also edits incorrectly charged L-seryl-tRNA(Thr). This chain is Threonine--tRNA ligase, found in Rickettsia conorii (strain ATCC VR-613 / Malish 7).